The primary structure comprises 407 residues: RNA-binding motif, single-stranded-interacting protein 2 (407 aa).

The residue at position 1 (Met1) is an N-acetylmethionine. Residues 14-51 (FGYNKNNKKPYVSLSQQMAPPSPSSSTPNSSSGSTAHD) are disordered. The segment covering 37–47 (SSSTPNSSSGS) has biased composition (low complexity). 2 RRM domains span residues 56-129 (TNLY…MAKQ) and 135-220 (TNLY…FADG). Ser106 bears the Phosphoserine mark. A phosphoserine mark is found at Ser280 and Ser285. Over residues 374–392 (PSSSVSVEESGSQQSQVPV) the composition is skewed to low complexity. Residues 374 to 398 (PSSSVSVEESGSQQSQVPVDAPSEH) are disordered.

The protein localises to the nucleus. This Bos taurus (Bovine) protein is RNA-binding motif, single-stranded-interacting protein 2 (RBMS2).